The following is a 74-amino-acid chain: NAD(P)H-quinone oxidoreductase subunit O (74 aa).

This sequence belongs to the complex I NdhO subunit family. NDH-1 can be composed of about 15 different subunits; different subcomplexes with different compositions have been identified which probably have different functions.

The protein resides in the cellular thylakoid membrane. The enzyme catalyses a plastoquinone + NADH + (n+1) H(+)(in) = a plastoquinol + NAD(+) + n H(+)(out). It carries out the reaction a plastoquinone + NADPH + (n+1) H(+)(in) = a plastoquinol + NADP(+) + n H(+)(out). In terms of biological role, NDH-1 shuttles electrons from an unknown electron donor, via FMN and iron-sulfur (Fe-S) centers, to quinones in the respiratory and/or the photosynthetic chain. The immediate electron acceptor for the enzyme in this species is believed to be plastoquinone. Couples the redox reaction to proton translocation, and thus conserves the redox energy in a proton gradient. Cyanobacterial NDH-1 also plays a role in inorganic carbon-concentration. The chain is NAD(P)H-quinone oxidoreductase subunit O from Synechococcus sp. (strain RCC307).